Consider the following 308-residue polypeptide: Reaction center protein M chain (308 aa).

Transmembrane regions (helical) follow at residues 54–80 (GSLG…YQAG), 111–140 (KEGG…RAQA), and 143–168 (MGKH…RPIL). Residues histidine 183 and histidine 203 each coordinate (7R,8Z)-bacteriochlorophyll b. A helical membrane pass occupies residues 198 to 226 (FYNPFHGLSIAFLYGSALLFAMHGATILA). Fe cation-binding residues include histidine 220 and glutamate 235. A ubiquinone is bound at residue tryptophan 253. The chain crosses the membrane as a helical span at residues 260-286 (NATMEGIHRWAIWMAVLVTLTGGIGIL). A Fe cation-binding site is contributed by histidine 267.

Belongs to the reaction center PufL/M/PsbA/D family. As to quaternary structure, reaction center is composed of four bacteriochlorophylls, two bacteriopheophytins, two ubiquinones, one iron, and three highly hydrophobic polypeptide chains (designated L, M, and H).

The protein localises to the cellular chromatophore membrane. The reaction center is a membrane-bound complex that mediates the initial photochemical event in the electron transfer process of photosynthesis. In Cereibacter sphaeroides (strain ATCC 17023 / DSM 158 / JCM 6121 / CCUG 31486 / LMG 2827 / NBRC 12203 / NCIMB 8253 / ATH 2.4.1.) (Rhodobacter sphaeroides), this protein is Reaction center protein M chain (pufM).